The sequence spans 421 residues: Histidine--tRNA ligase (421 aa).

This sequence belongs to the class-II aminoacyl-tRNA synthetase family. As to quaternary structure, homodimer.

The protein localises to the cytoplasm. The enzyme catalyses tRNA(His) + L-histidine + ATP = L-histidyl-tRNA(His) + AMP + diphosphate + H(+). The sequence is that of Histidine--tRNA ligase from Nitrosomonas eutropha (strain DSM 101675 / C91 / Nm57).